The chain runs to 305 residues: Carbonic anhydrase 5A, mitochondrial (305 aa).

The transit peptide at 1-38 (MLGRNTWKTSAFSFLVEQMWAPLWSRSMRPGRWCSQRS) directs the protein to the mitochondrion. Residues 39–296 (CAWQTSNNTL…LMNRKVWASF (258 aa)) enclose the Alpha-carbonic anhydrase domain. Positions 130, 132, and 155 each coordinate Zn(2+).

It belongs to the alpha-carbonic anhydrase family. Zn(2+) is required as a cofactor.

It is found in the mitochondrion. The catalysed reaction is hydrogencarbonate + H(+) = CO2 + H2O. Activated by L- and D-histidine. Activated by L- and D-phenylalanine. Activated by L-adrenaline. Inhibited by coumarins, sulfonamide derivatives such as acetazolamide and Foscarnet (phosphonoformate trisodium salt). Activated by histamine. Mitochondrial carbonic anhydrase that catalyzes the reversible conversion of carbon dioxide to bicarbonate/HCO3. Mitochondria are impermeable to HCO3, and thus this intramitochondrial carbonic anhydrase is pivotal in providing HCO3 for multiple mitochondrial enzymes that catalyze the formation of essential metabolites of intermediary metabolism in the urea and Krebs cycles. This is Carbonic anhydrase 5A, mitochondrial from Homo sapiens (Human).